The following is a 125-amino-acid chain: MIQIDFQKMGGLIPAIIQDHESGEVLMVAFMDEKTLNLTLESGKTWFFSRTRNKYWMKGEESGNTQEVIEVLTDCDADSVVIKVKQNGPAACHTGNRSCFYVRWEGGQWVEHSNPLFDPKEVYKK.

Residue Asp-74 participates in Mg(2+) binding. Residue Cys-75 coordinates Zn(2+). Positions 76 and 78 each coordinate Mg(2+). Zn(2+) contacts are provided by Cys-92 and Cys-99.

Belongs to the PRA-CH family. Homodimer. It depends on Mg(2+) as a cofactor. Zn(2+) serves as cofactor.

It is found in the cytoplasm. It carries out the reaction 1-(5-phospho-beta-D-ribosyl)-5'-AMP + H2O = 1-(5-phospho-beta-D-ribosyl)-5-[(5-phospho-beta-D-ribosylamino)methylideneamino]imidazole-4-carboxamide. The protein operates within amino-acid biosynthesis; L-histidine biosynthesis; L-histidine from 5-phospho-alpha-D-ribose 1-diphosphate: step 3/9. Its function is as follows. Catalyzes the hydrolysis of the adenine ring of phosphoribosyl-AMP. The sequence is that of Phosphoribosyl-AMP cyclohydrolase from Geobacter metallireducens (strain ATCC 53774 / DSM 7210 / GS-15).